We begin with the raw amino-acid sequence, 431 residues long: Enolase (431 aa).

Glutamine 167 lines the (2R)-2-phosphoglycerate pocket. The active-site Proton donor is the glutamate 209. Aspartate 246, glutamate 290, and aspartate 317 together coordinate Mg(2+). 4 residues coordinate (2R)-2-phosphoglycerate: lysine 342, arginine 371, serine 372, and lysine 393. The active-site Proton acceptor is the lysine 342.

It belongs to the enolase family. Component of the RNA degradosome, a multiprotein complex involved in RNA processing and mRNA degradation. It depends on Mg(2+) as a cofactor.

It is found in the cytoplasm. The protein localises to the secreted. It localises to the cell surface. The catalysed reaction is (2R)-2-phosphoglycerate = phosphoenolpyruvate + H2O. The protein operates within carbohydrate degradation; glycolysis; pyruvate from D-glyceraldehyde 3-phosphate: step 4/5. Its function is as follows. Catalyzes the reversible conversion of 2-phosphoglycerate (2-PG) into phosphoenolpyruvate (PEP). It is essential for the degradation of carbohydrates via glycolysis. This chain is Enolase, found in Yersinia enterocolitica serotype O:8 / biotype 1B (strain NCTC 13174 / 8081).